Reading from the N-terminus, the 350-residue chain is MNPRGLFQDFNPSKFLIYACLLLFSVLLPLRLDGVIQWSYWAVFAPIWLWKLLVLAGASVGAGVWARNPRYRTEGEACVEFKAMLIAVGIHLLLLMFEVLVCDRVERGTHFWLLVFMPLFFVSPVSVAACVWGFRHDRSLELEILCSVNILQFIFIALRLDRIIHWPWLVVFVPLWILMSFLCLVVLYYIVWSLLFLRSLDVVAEQRRTHVTMAICWITIVVPLLIFEVLLVHRLDGHNMFSYISIFVPLWLSLITLMATTFRRKGGNHWWFGIRRDFCQFLLEIFPFLREYGNISYDLHHEDSEDAEETSAPEAPKIAPMFGKKARVVITQSPGKYVPPPPKLNIDMPD.

Helical transmembrane passes span 16–36 (LIYACLLLFSVLLPLRLDGVI), 41–61 (WAVFAPIWLWKLLVLAGASVG), 81–101 (FKAMLIAVGIHLLLLMFEVLV), 111–131 (FWLLVFMPLFFVSPVSVAACV), 168–188 (WLVVFVPLWILMSFLCLVVLY), 211–231 (VTMAICWITIVVPLLIFEVLL), and 240–260 (MFSYISIFVPLWLSLITLMAT).

The protein belongs to the TMEM185 family.

It is found in the membrane. This is Transmembrane protein 185B (TMEM185B) from Bos taurus (Bovine).